The sequence spans 95 residues: Mitochondrial import inner membrane translocase subunit Tim9 (95 aa).

The Twin CX3C motif signature appears at 35–59 (CFTDCIRDFTTRDVKDSEEKCSLNC). 2 disulfide bridges follow: cysteine 35/cysteine 59 and cysteine 39/cysteine 55.

Belongs to the small Tim family. Heterohexamer; composed of 3 copies of Tim9 and 3 copies of Tim10, named soluble 70 kDa complex. The complex associates with the Tim22 component of the TIM22 complex. Interacts with multi-pass transmembrane proteins in transit.

It is found in the mitochondrion inner membrane. Its function is as follows. Mitochondrial intermembrane chaperone that participates in the import and insertion of multi-pass transmembrane proteins into the mitochondrial inner membrane. May also be required for the transfer of beta-barrel precursors from the TOM complex to the sorting and assembly machinery (SAM complex) of the outer membrane. Acts as a chaperone-like protein that protects the hydrophobic precursors from aggregation and guide them through the mitochondrial intermembrane space. This Drosophila melanogaster (Fruit fly) protein is Mitochondrial import inner membrane translocase subunit Tim9 (Tim9a).